Consider the following 59-residue polypeptide: Large ribosomal subunit protein bL33 (59 aa).

Belongs to the bacterial ribosomal protein bL33 family.

The sequence is that of Large ribosomal subunit protein bL33 from Neorickettsia sennetsu (strain ATCC VR-367 / Miyayama) (Ehrlichia sennetsu).